The primary structure comprises 365 residues: Probable flavin mononucleotide-dependent alkene reductase (365 aa).

Residues 30 to 32 (PLT), alanine 63, and glutamine 105 contribute to the FMN site. Catalysis depends on tyrosine 191, which acts as the Proton donor. Residues arginine 238, serine 303, and 324 to 325 (GT) each bind FMN.

This sequence belongs to the NADH:flavin oxidoreductase/NADH oxidase family. In terms of assembly, monomer. Requires FMN as cofactor.

The protein resides in the cytoplasm. The protein localises to the cytosol. Its function is as follows. May function as a flavin mononucleotide (FMN)-dependent alkene reductase on substrates carrying alpha,beta-unsaturated carbonyl groups (ketones, aldehydes, carboxylic acids, esters, lactones or cyclic imides). The catalysis depends on NAD(P)H, which acts as a hydride donor for the reduction. Seems to be involved in metabolic pathways required for efficient replication of amastigotes within macrophages. In terms of biological role, acts as a FMN-dependent nitroreductase that activates anti-leishmanial bicyclic nitroaromatic prodrugs including delamanid, DNDI-VL-2098 and (R)-PA-824, forming toxic products that kill the parasites. The protein is Probable flavin mononucleotide-dependent alkene reductase of Leishmania infantum.